Here is a 143-residue protein sequence, read N- to C-terminus: Ribonuclease H (143 aa).

The 140-residue stretch at Met1–Glu140 folds into the RNase H type-1 domain. The Mg(2+) site is built by Asp8, Glu46, Asp68, and Asp132.

This sequence belongs to the RNase H family. As to quaternary structure, monomer. It depends on Mg(2+) as a cofactor.

It is found in the cytoplasm. The enzyme catalyses Endonucleolytic cleavage to 5'-phosphomonoester.. Its function is as follows. Endonuclease that specifically degrades the RNA of RNA-DNA hybrids. The sequence is that of Ribonuclease H from Legionella pneumophila (strain Lens).